The primary structure comprises 209 residues: Large ribosomal subunit protein uL3 (209 aa).

Q150 is subject to N5-methylglutamine.

Belongs to the universal ribosomal protein uL3 family. In terms of assembly, part of the 50S ribosomal subunit. Forms a cluster with proteins L14 and L19. Methylated by PrmB.

Functionally, one of the primary rRNA binding proteins, it binds directly near the 3'-end of the 23S rRNA, where it nucleates assembly of the 50S subunit. The protein is Large ribosomal subunit protein uL3 of Vibrio vulnificus (strain CMCP6).